Consider the following 859-residue polypeptide: Leucine--tRNA ligase (859 aa).

A 'HIGH' region motif is present at residues 42–52; sequence PYPSGKLHMGH. The 'KMSKS' region signature appears at 618 to 622; it reads KMSKS. Lysine 621 serves as a coordination point for ATP.

Belongs to the class-I aminoacyl-tRNA synthetase family.

The protein localises to the cytoplasm. It carries out the reaction tRNA(Leu) + L-leucine + ATP = L-leucyl-tRNA(Leu) + AMP + diphosphate. In Buchnera aphidicola subsp. Acyrthosiphon pisum (strain APS) (Acyrthosiphon pisum symbiotic bacterium), this protein is Leucine--tRNA ligase.